The primary structure comprises 156 residues: CRIB domain-containing protein RIC11 (156 aa).

In terms of domain architecture, CRIB spans Ile-26–Gly-39. The tract at residues Gln-87–Ala-156 is disordered. Residues Ile-109–Pro-120 show a composition bias toward basic residues. The segment covering Ser-121–Lys-142 has biased composition (low complexity).

Functions as a downstream effector of Rho-related GTP binding proteins of the 'Rho of Plants' (ROPs) family. Participates in the propagation of ROP GTPase signals in specific cellular responses. This is CRIB domain-containing protein RIC11 (RIC11) from Arabidopsis thaliana (Mouse-ear cress).